Here is a 313-residue protein sequence, read N- to C-terminus: Biotin synthase (313 aa).

In terms of domain architecture, Radical SAM core spans 38–262 (REVQISTLLS…TMPHARVRLS (225 aa)). The [4Fe-4S] cluster site is built by Cys53, Cys57, and Cys60. [2Fe-2S] cluster-binding residues include Cys97, Cys128, Cys188, and Arg260.

The protein belongs to the radical SAM superfamily. Biotin synthase family. In terms of assembly, homodimer. [4Fe-4S] cluster serves as cofactor. [2Fe-2S] cluster is required as a cofactor.

The catalysed reaction is (4R,5S)-dethiobiotin + (sulfur carrier)-SH + 2 reduced [2Fe-2S]-[ferredoxin] + 2 S-adenosyl-L-methionine = (sulfur carrier)-H + biotin + 2 5'-deoxyadenosine + 2 L-methionine + 2 oxidized [2Fe-2S]-[ferredoxin]. Its pathway is cofactor biosynthesis; biotin biosynthesis; biotin from 7,8-diaminononanoate: step 2/2. Functionally, catalyzes the conversion of dethiobiotin (DTB) to biotin by the insertion of a sulfur atom into dethiobiotin via a radical-based mechanism. This Granulibacter bethesdensis (strain ATCC BAA-1260 / CGDNIH1) protein is Biotin synthase.